We begin with the raw amino-acid sequence, 101 residues long: uncharacterized protein (101 aa).

Positions 1–19 (MKFKYLSTPLLFSALLFSA) are cleaved as a signal peptide. Cys-20 carries the N-palmitoyl cysteine lipid modification. Cys-20 carries the S-diacylglycerol cysteine lipid modification.

This sequence belongs to the MG439/MG440 family.

Its subcellular location is the cell membrane. This is an uncharacterized protein from Mycoplasma pneumoniae (strain ATCC 29342 / M129 / Subtype 1) (Mycoplasmoides pneumoniae).